The primary structure comprises 271 residues: UPF0758 protein ACIAD3126 (271 aa).

The MPN domain maps to 120–242; sequence NLNSSRLVLD…TFSFAERALL (123 aa). Zn(2+) contacts are provided by H191, H193, and D204. Residues 191–204 carry the JAMM motif motif; the sequence is HNHPFGKAEPSAAD.

The protein belongs to the UPF0758 family.

The sequence is that of UPF0758 protein ACIAD3126 from Acinetobacter baylyi (strain ATCC 33305 / BD413 / ADP1).